Here is a 639-residue protein sequence, read N- to C-terminus: Muscarinic acetylcholine receptor M3 (639 aa).

The Extracellular segment spans residues 1–115 (MLTHYQLCFQ…DPLGGHAVWQ (115 aa)). 6 N-linked (GlcNAc...) asparagine glycosylation sites follow: Asn-16, Asn-44, Asn-45, Asn-54, Asn-97, and Asn-101. The helical transmembrane segment at 116-139 (VVLIAFLTGIIALVTIIGNILVIV) threads the bilayer. At 140-152 (SFKVNKQLKTVNN) the chain is on the cytoplasmic side. The chain crosses the membrane as a helical span at residues 153–173 (YFLLSLACADLIIGVISMNLF). The Extracellular segment spans residues 174-190 (TTYIIMGHWALGNLACD). A disulfide bond links Cys-189 and Cys-269. The helical transmembrane segment at 191-212 (LWLSIDYVASNASVMNLLVISF) threads the bilayer. Topologically, residues 213–232 (DRYFSITRPLTYRAKRTTKR) are cytoplasmic. Residues 233 to 255 (AGVMIGLAWIISFVLWAPAILFW) form a helical membrane-spanning segment. At 256–277 (QYFVGKRTVPLDECFIQFLSEP) the chain is on the extracellular side. Residues 278–300 (IITFGTAIAAFYLPVTIMSILYW) form a helical membrane-spanning segment. Residues 301 to 542 (RIYKETEKRT…LIKEKKAAQT (242 aa)) are Cytoplasmic-facing. Disordered stretches follow at residues 370–404 (PNTDQGDQEHSSSDSWNNNDAAASLENSASSDEED) and 431–471 (LPSS…GGSF). Residues 382 to 393 (SDSWNNNDAAAS) are compositionally biased toward low complexity. The span at 443–454 (ELQKSDTDSQEK) shows a compositional bias: basic and acidic residues. The chain crosses the membrane as a helical span at residues 543–563 (LSAILFAFIITWTPYNIMVLV). Topologically, residues 564 to 576 (NTFCDCVPKTVWN) are extracellular. A helical membrane pass occupies residues 577–596 (LGYWLCYINSTVNPVCYALC). At 597–639 (NKMFRNTFKMLLLCQCDKRKRRKQQYQQRQSVIFHKRIPREAS) the chain is on the cytoplasmic side.

This sequence belongs to the G-protein coupled receptor 1 family. Muscarinic acetylcholine receptor subfamily. CHRM3 sub-subfamily. In terms of tissue distribution, brain, heart atria, and ventricle.

Its subcellular location is the cell membrane. The protein localises to the postsynaptic cell membrane. Its function is as follows. The muscarinic acetylcholine receptor mediates various cellular responses, including inhibition of adenylate cyclase, breakdown of phosphoinositides and modulation of potassium channels through the action of G proteins. Primary transducing effect is Pi turnover. The chain is Muscarinic acetylcholine receptor M3 (CHRM3) from Gallus gallus (Chicken).